We begin with the raw amino-acid sequence, 1025 residues long: Putative receptor-like protein kinase At3g47110 (1025 aa).

Positions 1–30 (MGVPCIVMRLILVSALLVSVSLEHSDMVCA) are cleaved as a signal peptide. The Extracellular portion of the chain corresponds to 31-653 (QTIRLTEETD…LPRRHSSVRK (623 aa)). N-linked (GlcNAc...) asparagine glycosylation is found at asparagine 63 and asparagine 103. 10 LRR repeats span residues 104 to 128 (LSFL…VGNL), 130 to 151 (RLQY…VLSN), 152 to 175 (CSSL…EFGS), 176 to 200 (LSKL…LGNL), 202 to 224 (SLQM…IARL), 226 to 248 (QMIF…IYNL), 249 to 271 (SSLI…DFGS), 273 to 297 (LPNL…LSNI), 298 to 323 (SSLR…RLQN), and 325 to 344 (LLLG…DLDF). Asparagine 135 and asparagine 151 each carry an N-linked (GlcNAc...) asparagine glycan. Residues asparagine 188 and asparagine 199 are each glycosylated (N-linked (GlcNAc...) asparagine). Asparagine 247 is a glycosylation site (N-linked (GlcNAc...) asparagine). Asparagine 296 carries N-linked (GlcNAc...) asparagine glycosylation. N-linked (GlcNAc...) asparagine glycosylation is found at asparagine 331, asparagine 336, asparagine 350, and asparagine 374. LRR repeat units follow at residues 351 to 374 (CSQL…FIAN), 376 to 400 (STQL…IGNL), 401 to 424 (VSLQ…LGEL), 426 to 448 (ELRK…LGNI), 449 to 472 (SGLT…LGSC), 473 to 496 (SYLL…LMEL), 498 to 520 (SLVV…IGKL), 521 to 544 (KFLL…LANC), 546 to 567 (SLEF…IRGL), 568 to 593 (TGLR…NFSK), and 595 to 616 (QNLN…VFRN). Residues asparagine 447, asparagine 458, asparagine 486, and asparagine 503 are each glycosylated (N-linked (GlcNAc...) asparagine). Asparagine 579, asparagine 590, asparagine 598, and asparagine 616 each carry an N-linked (GlcNAc...) asparagine glycan. The helical transmembrane segment at 654-674 (IITICVSAVMAALLLLCLCVV) threads the bilayer. Topologically, residues 675-1025 (YLCWYKLRVK…RESFFRDEET (351 aa)) are cytoplasmic. Residue threonine 716 is modified to Phosphothreonine. Residues 719 to 1020 (FSSSNLIGSG…KLVSIRESFF (302 aa)) form the Protein kinase domain. ATP is bound by residues 725-733 (IGSGNFGAV) and lysine 748. 2 positions are modified to phosphotyrosine: tyrosine 798 and tyrosine 843. The active-site Proton acceptor is aspartate 856. At tyrosine 904 the chain carries Phosphotyrosine.

The protein belongs to the protein kinase superfamily. Ser/Thr protein kinase family.

It localises to the cell membrane. It carries out the reaction L-seryl-[protein] + ATP = O-phospho-L-seryl-[protein] + ADP + H(+). The enzyme catalyses L-threonyl-[protein] + ATP = O-phospho-L-threonyl-[protein] + ADP + H(+). This Arabidopsis thaliana (Mouse-ear cress) protein is Putative receptor-like protein kinase At3g47110.